The chain runs to 698 residues: Serotransferrin (698 aa).

The signal sequence occupies residues 1 to 19 (MRLAVGALLVCAVLGLCLA). 2 Transferrin-like domains span residues 25 to 347 (VRWC…NLRE) and 361 to 683 (VKWC…NLRK). 2 disulfide bridges follow: Cys28/Cys67 and Cys38/Cys58. The residue at position 42 (Arg42) is a Dimethylated arginine. An O-linked (GalNAc...) serine glycan is attached at Ser51. Positions 82 and 114 each coordinate Fe(3+). Cystine bridges form between Cys137-Cys213, Cys156-Cys350, Cys177-Cys193, Cys180-Cys198, Cys190-Cys196, Cys246-Cys260, Cys358-Cys615, Cys364-Cys396, Cys374-Cys387, Cys421-Cys693, Cys437-Cys656, Cys469-Cys542, Cys493-Cys684, Cys503-Cys517, Cys514-Cys525, Cys582-Cys596, and Cys634-Cys639. Thr139, Arg143, Ala145, and Gly146 together coordinate hydrogencarbonate. Fe(3+) is bound at residue Tyr207. His268 lines the Fe(3+) pocket. The residue at position 389 (Ser389) is a Phosphoserine; by FAM20C. Asp411 serves as a coordination point for Fe(3+). A glycan (N-linked (GlcNAc...) (complex) asparagine) is linked at Asn432. Position 445 (Tyr445) interacts with Fe(3+). Hydrogencarbonate-binding residues include Thr471, Arg475, Ala477, and Gly478. An N-linked (GlcNAc...) asparagine; atypical; partial glycan is attached at Asn491. A Fe(3+)-binding site is contributed by Tyr536. His604 contacts Fe(3+). Asn630 carries N-linked (GlcNAc...) (complex) asparagine glycosylation. Residue Ser685 is modified to Phosphoserine; by FAM20C.

The protein belongs to the transferrin family. As to quaternary structure, monomer. Part of a complex composed of SLC40A1/ferroportin, TF/transferrin and HEPH/hephaestin that transfers iron from cells to transferrin. In terms of assembly, (Microbial infection) Binds to Neisseria transferrin-binding protein A (tbpA or tbp1). Forms a large complex with TbpA and TbpB. (Microbial infection) Binds to Neisseria transferrin-binding protein B (tbpb or tbp2). As to expression, expressed by the liver and secreted in plasma.

It localises to the secreted. Its function is as follows. Transferrins are iron binding transport proteins which can bind two Fe(3+) ions in association with the binding of an anion, usually bicarbonate. It is responsible for the transport of iron from sites of absorption and heme degradation to those of storage and utilization. Serum transferrin may also have a further role in stimulating cell proliferation. In terms of biological role, (Microbial infection) Serves as an iron source for Neisseria species, which capture the protein and extract its iron for their own use. Functionally, (Microbial infection) Serves as an iron source for parasite T.brucei (strain 427), which capture TF via its own transferrin receptor ESAG6:ESAG7 and extract its iron for its own use. The sequence is that of Serotransferrin from Homo sapiens (Human).